Consider the following 105-residue polypeptide: Oxytocin-neurophysin 1 (105 aa).

Cys-1 and Cys-6 are disulfide-bonded. A Glycine amide modification is found at Gly-9. 7 disulfides stabilise this stretch: Cys-22/Cys-66, Cys-25/Cys-39, Cys-33/Cys-56, Cys-40/Cys-46, Cys-73/Cys-85, Cys-79/Cys-97, and Cys-86/Cys-91.

The protein belongs to the vasopressin/oxytocin family. Interacts with oxytocin receptor (Ki=1.5 nM). Interacts with vasopressin V1aR/AVPR1A (Ki=37 nM), V1bR/AVPR1B (Ki=222 nM), and V2R/AVPR2 receptors (Ki=823 nM).

The protein resides in the secreted. Its function is as follows. Neurophysin 1 specifically binds oxytocin. Oxytocin causes contraction of the smooth muscle of the uterus and of the mammary gland. Acts by binding to oxytocin receptor (OXTR). The chain is Oxytocin-neurophysin 1 (OXT) from Equus caballus (Horse).